The following is a 507-amino-acid chain: MASYSVTVSVAGTSINKYPAGSAGFDLAMADSYDPGKQHARRVAAYLPKQQGLIYLPGQQTVLSEDSDQARPFKQRRYFFYVTGVVEPDCHVTYDIAEDKLTLYVPDFDFKRTIWTGPTLGKDEASQRYDVDRVEYFSALEGDVLRWSQANPSLPIYILHPDQRPVTPLTVAYLYESKSLKHAMDACRVIKDEHEIQLIQRANRVSGAAHRSILANLHHFKNEAQIAGLFIDVCLSLRSKGTAYQTIAGSGSNGATLHYTRNNEPLAGRQMVVLDAGAEWSCYASDVTRSFPIPSSVSGGRDWPSREAEQIYAIVQRMQEECISRVKEGTLFFSIHQHAHAIALEELLKLGILRIPQGSTKADLIKAEVTALFFPHGLGHHLGLEVHDVSPDSGTIPVELAIEREKGLMSVTEHRPPCTLSAPPLASGMVITVEPGLYFNRLAIDQARAERDEPNSKGRFVNFDVVERYVDVGGVRIEDDVLVTKDGNKNLTDAPKGKEMLDLIYGR.

The Mn(2+) site is built by Asp-275, Asp-286, Glu-434, and Glu-478.

This sequence belongs to the peptidase M24B family. It depends on Mn(2+) as a cofactor.

It carries out the reaction Release of any N-terminal amino acid, including proline, that is linked to proline, even from a dipeptide or tripeptide.. Catalyzes the removal of a penultimate prolyl residue from the N-termini of peptides. In Arthroderma benhamiae (strain ATCC MYA-4681 / CBS 112371) (Trichophyton mentagrophytes), this protein is Probable Xaa-Pro aminopeptidase ARB_01886.